We begin with the raw amino-acid sequence, 354 residues long: Protein RecA (354 aa).

Residue 67 to 74 (GPESSGKT) participates in ATP binding. A disordered region spans residues 331–354 (NQDSTPDFSVDDNGEGVKETNEDF). The span at 345 to 354 (EGVKETNEDF) shows a compositional bias: basic and acidic residues.

Belongs to the RecA family.

It is found in the cytoplasm. Its function is as follows. Can catalyze the hydrolysis of ATP in the presence of single-stranded DNA, the ATP-dependent uptake of single-stranded DNA by duplex DNA, and the ATP-dependent hybridization of homologous single-stranded DNAs. It interacts with LexA causing its activation and leading to its autocatalytic cleavage. In Citrobacter koseri (strain ATCC BAA-895 / CDC 4225-83 / SGSC4696), this protein is Protein RecA.